Reading from the N-terminus, the 386-residue chain is Succinyl-diaminopimelate desuccinylase (386 aa).

Residue His-73 participates in Zn(2+) binding. Residue Asp-75 is part of the active site. A Zn(2+)-binding site is contributed by Asp-106. Glu-140 (proton acceptor) is an active-site residue. 3 residues coordinate Zn(2+): Glu-141, Glu-169, and His-355.

Belongs to the peptidase M20A family. DapE subfamily. In terms of assembly, homodimer. Requires Zn(2+) as cofactor. The cofactor is Co(2+).

The catalysed reaction is N-succinyl-(2S,6S)-2,6-diaminopimelate + H2O = (2S,6S)-2,6-diaminopimelate + succinate. It functions in the pathway amino-acid biosynthesis; L-lysine biosynthesis via DAP pathway; LL-2,6-diaminopimelate from (S)-tetrahydrodipicolinate (succinylase route): step 3/3. Catalyzes the hydrolysis of N-succinyl-L,L-diaminopimelic acid (SDAP), forming succinate and LL-2,6-diaminopimelate (DAP), an intermediate involved in the bacterial biosynthesis of lysine and meso-diaminopimelic acid, an essential component of bacterial cell walls. The sequence is that of Succinyl-diaminopimelate desuccinylase from Delftia acidovorans (strain DSM 14801 / SPH-1).